Here is a 109-residue protein sequence, read N- to C-terminus: Hainantoxin-XVIII.2 (109 aa).

Positions Met-1–Ala-18 are cleaved as a signal peptide. Positions Phe-19 to Ala-46 are excised as a propeptide. 4 disulfide bridges follow: Cys-47–Cys-62, Cys-55–Cys-68, Cys-59–Cys-108, and Cys-61–Cys-81.

It belongs to the neurotoxin 25 family. F7 subfamily. As to expression, expressed by the venom gland.

It is found in the secreted. In terms of biological role, putative ion channel inhibitor. The chain is Hainantoxin-XVIII.2 from Cyriopagopus hainanus (Chinese bird spider).